The chain runs to 626 residues: tRNA uridine 5-carboxymethylaminomethyl modification enzyme MnmG (626 aa).

Gly14–Gly19 is a binding site for FAD. Gly273–Phe287 contacts NAD(+).

It belongs to the MnmG family. Homodimer. Heterotetramer of two MnmE and two MnmG subunits. It depends on FAD as a cofactor.

It localises to the cytoplasm. NAD-binding protein involved in the addition of a carboxymethylaminomethyl (cmnm) group at the wobble position (U34) of certain tRNAs, forming tRNA-cmnm(5)s(2)U34. The sequence is that of tRNA uridine 5-carboxymethylaminomethyl modification enzyme MnmG from Caldicellulosiruptor saccharolyticus (strain ATCC 43494 / DSM 8903 / Tp8T 6331).